A 75-amino-acid polypeptide reads, in one-letter code: Putative membrane protein insertion efficiency factor (75 aa).

Belongs to the UPF0161 family.

Its subcellular location is the cell membrane. In terms of biological role, could be involved in insertion of integral membrane proteins into the membrane. The sequence is that of Putative membrane protein insertion efficiency factor from Halalkalibacterium halodurans (strain ATCC BAA-125 / DSM 18197 / FERM 7344 / JCM 9153 / C-125) (Bacillus halodurans).